A 493-amino-acid chain; its full sequence is UDP-N-acetylmuramoyl-L-alanyl-D-glutamate--2,6-diaminopimelate ligase (493 aa).

Residues Leu30 and Ser32 each contribute to the UDP-N-acetyl-alpha-D-muramoyl-L-alanyl-D-glutamate site. 117 to 123 (GTNGKTT) is a binding site for ATP. Residues Asn158, 159–160 (TT), Ser186, Gln192, and Arg194 contribute to the UDP-N-acetyl-alpha-D-muramoyl-L-alanyl-D-glutamate site. Lys226 carries the post-translational modification N6-carboxylysine. Residues Arg388, 412 to 415 (DNPR), Gly463, and Glu467 each bind meso-2,6-diaminopimelate. Residues 412–415 (DNPR) carry the Meso-diaminopimelate recognition motif motif.

Belongs to the MurCDEF family. MurE subfamily. Mg(2+) is required as a cofactor. In terms of processing, carboxylation is probably crucial for Mg(2+) binding and, consequently, for the gamma-phosphate positioning of ATP.

It is found in the cytoplasm. It carries out the reaction UDP-N-acetyl-alpha-D-muramoyl-L-alanyl-D-glutamate + meso-2,6-diaminopimelate + ATP = UDP-N-acetyl-alpha-D-muramoyl-L-alanyl-gamma-D-glutamyl-meso-2,6-diaminopimelate + ADP + phosphate + H(+). It participates in cell wall biogenesis; peptidoglycan biosynthesis. Its function is as follows. Catalyzes the addition of meso-diaminopimelic acid to the nucleotide precursor UDP-N-acetylmuramoyl-L-alanyl-D-glutamate (UMAG) in the biosynthesis of bacterial cell-wall peptidoglycan. The chain is UDP-N-acetylmuramoyl-L-alanyl-D-glutamate--2,6-diaminopimelate ligase from Vibrio vulnificus (strain YJ016).